Consider the following 295-residue polypeptide: ATP synthase gamma chain (295 aa).

Belongs to the ATPase gamma chain family. F-type ATPases have 2 components, CF(1) - the catalytic core - and CF(0) - the membrane proton channel. CF(1) has five subunits: alpha(3), beta(3), gamma(1), delta(1), epsilon(1). CF(0) has three main subunits: a, b and c.

It is found in the cell inner membrane. In terms of biological role, produces ATP from ADP in the presence of a proton gradient across the membrane. The gamma chain is believed to be important in regulating ATPase activity and the flow of protons through the CF(0) complex. The polypeptide is ATP synthase gamma chain (Aliarcobacter butzleri (strain RM4018) (Arcobacter butzleri)).